A 196-amino-acid polypeptide reads, in one-letter code: Flagellin B2 (196 aa).

Residues 1 to 12 (MFEFITDEDERG) constitute a propeptide that is removed on maturation.

It belongs to the archaeal flagellin family. In terms of processing, glycosylated.

The protein localises to the archaeal flagellum. Flagellin is the subunit protein which polymerizes to form the filaments of archaeal flagella. This chain is Flagellin B2 (flaB2), found in Halobacterium salinarum (strain ATCC 700922 / JCM 11081 / NRC-1) (Halobacterium halobium).